A 261-amino-acid chain; its full sequence is Type III pantothenate kinase (261 aa).

ATP is bound at residue 6–13 (DAGNSNIT). Substrate-binding positions include Tyr-100 and 107 to 110 (GADR). The Proton acceptor role is filled by Asp-109. Asp-129 lines the K(+) pocket. Thr-132 provides a ligand contact to ATP. Thr-184 lines the substrate pocket.

This sequence belongs to the type III pantothenate kinase family. As to quaternary structure, homodimer. Requires NH4(+) as cofactor. It depends on K(+) as a cofactor.

The protein localises to the cytoplasm. It carries out the reaction (R)-pantothenate + ATP = (R)-4'-phosphopantothenate + ADP + H(+). The protein operates within cofactor biosynthesis; coenzyme A biosynthesis; CoA from (R)-pantothenate: step 1/5. Its function is as follows. Catalyzes the phosphorylation of pantothenate (Pan), the first step in CoA biosynthesis. The polypeptide is Type III pantothenate kinase (Solibacter usitatus (strain Ellin6076)).